Reading from the N-terminus, the 431-residue chain is Histidine--tRNA ligase (431 aa).

It belongs to the class-II aminoacyl-tRNA synthetase family. In terms of assembly, homodimer.

It localises to the cytoplasm. It catalyses the reaction tRNA(His) + L-histidine + ATP = L-histidyl-tRNA(His) + AMP + diphosphate + H(+). This Neisseria meningitidis serogroup B (strain ATCC BAA-335 / MC58) protein is Histidine--tRNA ligase.